Consider the following 354-residue polypeptide: Uroporphyrinogen decarboxylase (354 aa).

Substrate-binding positions include 25–29 (RQAGR), F44, D75, Y152, T207, and H330.

It belongs to the uroporphyrinogen decarboxylase family. As to quaternary structure, homodimer.

It localises to the cytoplasm. It catalyses the reaction uroporphyrinogen III + 4 H(+) = coproporphyrinogen III + 4 CO2. The protein operates within porphyrin-containing compound metabolism; protoporphyrin-IX biosynthesis; coproporphyrinogen-III from 5-aminolevulinate: step 4/4. Catalyzes the decarboxylation of four acetate groups of uroporphyrinogen-III to yield coproporphyrinogen-III. The sequence is that of Uroporphyrinogen decarboxylase from Xylella fastidiosa (strain Temecula1 / ATCC 700964).